Consider the following 108-residue polypeptide: MMKGGMGNLMKQAQQMQAKMAKAQEELAQMEVVGEAGAGMVKVTMTGSHSVRKVELDDSLMEDDKDMIEDLLAAAVNDAVRRVEEQNKDKMGALTGGMQLPPGMKMPF.

The disordered stretch occupies residues 87–108 (NKDKMGALTGGMQLPPGMKMPF).

It belongs to the YbaB/EbfC family. Homodimer.

Its subcellular location is the cytoplasm. It localises to the nucleoid. Functionally, binds to DNA and alters its conformation. May be involved in regulation of gene expression, nucleoid organization and DNA protection. The chain is Nucleoid-associated protein CPS_3743 from Colwellia psychrerythraea (strain 34H / ATCC BAA-681) (Vibrio psychroerythus).